The primary structure comprises 553 residues: HTH-type transcriptional regulator SgrR (553 aa).

The region spanning 1–113 is the HTH marR-type domain; that stretch reads MSTSRLQQQF…RQMLLSQLGR (113 aa). The segment at residues 26–49 is a DNA-binding region (H-T-H motif); that stretch reads LQALAEVLNCSRRHVRSLLGKMQH. Positions 163 to 494 are solute-binding; it reads ELEPDLSHHW…EELHQDIESW (332 aa).

Its function is as follows. Activates the small RNA gene sgrS under glucose-phosphate stress conditions as well as yfdZ. Represses its own transcription under both stress and non-stress conditions. Might act as a sensor of the intracellular accumulation of phosphoglucose by binding these molecules in its C-terminal solute-binding domain. The chain is HTH-type transcriptional regulator SgrR from Yersinia pestis bv. Antiqua (strain Antiqua).